Here is a 250-residue protein sequence, read N- to C-terminus: Cobalt transport protein CbiM (250 aa).

The signal sequence occupies residues 1–27; it reads MKKPLFFIASACVTIYILFALSPSVYA. The next 6 helical transmembrane spans lie at 33–53, 70–90, 102–122, 134–154, 168–188, and 208–228; these read GFLP…FFLV, LLLA…IPSV, LGAL…VLLF, TLGA…YVLF, VFLA…IQLA, and IFAV…VVVW.

The protein belongs to the CbiM family. Forms an energy-coupling factor (ECF) transporter complex composed of an ATP-binding protein (A component, CbiO), a transmembrane protein (T component, CbiQ) and 2 possible substrate-capture proteins (S components, CbiM and CbiN) of unknown stoichimetry.

Its subcellular location is the cell membrane. Its pathway is cofactor biosynthesis; adenosylcobalamin biosynthesis. Part of the energy-coupling factor (ECF) transporter complex CbiMNOQ involved in cobalt import. The chain is Cobalt transport protein CbiM from Anoxybacillus flavithermus (strain DSM 21510 / WK1).